The following is a 429-amino-acid chain: UDP-N-acetylglucosamine 1-carboxyvinyltransferase 2 (429 aa).

Phosphoenolpyruvate is bound at residue 22–23; sequence KN. Position 93 (Arg-93) interacts with UDP-N-acetyl-alpha-D-glucosamine. Cys-117 serves as the catalytic Proton donor. 2-(S-cysteinyl)pyruvic acid O-phosphothioketal is present on Cys-117. UDP-N-acetyl-alpha-D-glucosamine-binding positions include 122–126, Asp-305, and Ile-327; that span reads RPIDQ.

It belongs to the EPSP synthase family. MurA subfamily.

The protein resides in the cytoplasm. It catalyses the reaction phosphoenolpyruvate + UDP-N-acetyl-alpha-D-glucosamine = UDP-N-acetyl-3-O-(1-carboxyvinyl)-alpha-D-glucosamine + phosphate. Its pathway is cell wall biogenesis; peptidoglycan biosynthesis. Its function is as follows. Cell wall formation. Adds enolpyruvyl to UDP-N-acetylglucosamine. This Bacillus anthracis protein is UDP-N-acetylglucosamine 1-carboxyvinyltransferase 2.